Consider the following 419-residue polypeptide: Histidine--tRNA ligase (419 aa).

Belongs to the class-II aminoacyl-tRNA synthetase family. As to quaternary structure, homodimer.

It localises to the cytoplasm. The catalysed reaction is tRNA(His) + L-histidine + ATP = L-histidyl-tRNA(His) + AMP + diphosphate + H(+). This Syntrophotalea carbinolica (strain DSM 2380 / NBRC 103641 / GraBd1) (Pelobacter carbinolicus) protein is Histidine--tRNA ligase.